The chain runs to 427 residues: Trigger factor (427 aa).

The PPIase FKBP-type domain occupies 163–248; the sequence is GDIVVIDFAG…LKEIKRKELA (86 aa).

Belongs to the FKBP-type PPIase family. Tig subfamily.

The protein resides in the cytoplasm. It catalyses the reaction [protein]-peptidylproline (omega=180) = [protein]-peptidylproline (omega=0). Functionally, involved in protein export. Acts as a chaperone by maintaining the newly synthesized protein in an open conformation. Functions as a peptidyl-prolyl cis-trans isomerase. This Carboxydothermus hydrogenoformans (strain ATCC BAA-161 / DSM 6008 / Z-2901) protein is Trigger factor.